The following is a 208-amino-acid chain: Potassium-transporting ATPase KdpC subunit (208 aa).

A helical transmembrane segment spans residues 6-26 (PALLVSIVLLVVCGLVYPLVL).

Belongs to the KdpC family. The system is composed of three essential subunits: KdpA, KdpB and KdpC.

The protein localises to the cell membrane. Functionally, part of the high-affinity ATP-driven potassium transport (or Kdp) system, which catalyzes the hydrolysis of ATP coupled with the electrogenic transport of potassium into the cytoplasm. This subunit acts as a catalytic chaperone that increases the ATP-binding affinity of the ATP-hydrolyzing subunit KdpB by the formation of a transient KdpB/KdpC/ATP ternary complex. The protein is Potassium-transporting ATPase KdpC subunit of Clostridioides difficile (strain 630) (Peptoclostridium difficile).